The following is a 165-amino-acid chain: Large ribosomal subunit protein uL10 (165 aa).

This sequence belongs to the universal ribosomal protein uL10 family. Part of the ribosomal stalk of the 50S ribosomal subunit. The N-terminus interacts with L11 and the large rRNA to form the base of the stalk. The C-terminus forms an elongated spine to which L12 dimers bind in a sequential fashion forming a multimeric L10(L12)X complex.

Its function is as follows. Forms part of the ribosomal stalk, playing a central role in the interaction of the ribosome with GTP-bound translation factors. This chain is Large ribosomal subunit protein uL10, found in Hamiltonella defensa subsp. Acyrthosiphon pisum (strain 5AT).